Here is a 394-residue protein sequence, read N- to C-terminus: Elongation factor Tu (394 aa).

In terms of domain architecture, tr-type G spans 10–204; the sequence is KPHLNVGTIG…ALDTYIPLPE (195 aa). The G1 stretch occupies residues 19–26; sequence GHVDHGKT. 19–26 provides a ligand contact to GTP; it reads GHVDHGKT. Thr26 contacts Mg(2+). Residues 60–64 form a G2 region; that stretch reads GITIN. The interval 81-84 is G3; the sequence is DCPG. GTP contacts are provided by residues 81–85 and 136–139; these read DCPGH and NKCD. Residues 136–139 are G4; sequence NKCD. The tract at residues 174-176 is G5; that stretch reads SAL.

Belongs to the TRAFAC class translation factor GTPase superfamily. Classic translation factor GTPase family. EF-Tu/EF-1A subfamily. As to quaternary structure, monomer.

It is found in the cytoplasm. The catalysed reaction is GTP + H2O = GDP + phosphate + H(+). Its function is as follows. GTP hydrolase that promotes the GTP-dependent binding of aminoacyl-tRNA to the A-site of ribosomes during protein biosynthesis. The protein is Elongation factor Tu of Psychromonas ingrahamii (strain DSM 17664 / CCUG 51855 / 37).